We begin with the raw amino-acid sequence, 155 residues long: Small ribosomal subunit protein uS7 (155 aa).

Belongs to the universal ribosomal protein uS7 family. As to quaternary structure, part of the 30S ribosomal subunit. Contacts proteins S9 and S11.

Its function is as follows. One of the primary rRNA binding proteins, it binds directly to 16S rRNA where it nucleates assembly of the head domain of the 30S subunit. Is located at the subunit interface close to the decoding center, probably blocks exit of the E-site tRNA. The protein is Small ribosomal subunit protein uS7 of Chlorobium phaeobacteroides (strain DSM 266 / SMG 266 / 2430).